The following is a 387-amino-acid chain: Phosphoglycerate kinase (387 aa).

Residues Asp-21–Asn-23, Arg-36, His-59–Arg-62, Arg-113, and Arg-146 contribute to the substrate site. ATP is bound by residues Lys-197, Glu-314, and Gly-340–Thr-343.

This sequence belongs to the phosphoglycerate kinase family. In terms of assembly, monomer.

It localises to the cytoplasm. It carries out the reaction (2R)-3-phosphoglycerate + ATP = (2R)-3-phospho-glyceroyl phosphate + ADP. It functions in the pathway carbohydrate degradation; glycolysis; pyruvate from D-glyceraldehyde 3-phosphate: step 2/5. In Pseudomonas putida (strain W619), this protein is Phosphoglycerate kinase.